Here is a 185-residue protein sequence, read N- to C-terminus: Bcl-2-like protein 10 (185 aa).

The short motif at 76–95 is the BH1 element; the sequence is LSNDQEFNWGRLVMLLAFVG. Residues 138 to 149 carry the BH2 motif; that stretch reads WLEAHGGWDGFC. A helical membrane pass occupies residues 160-182; the sequence is FWRRLLIRAILSCFFATAIFYIW.

Belongs to the Bcl-2 family. Interacts with BAX. Interacts with BCL2, BCL2L1/BCLX. Interacts with APAF1. Interacts with ITPR1, ITPR2 and ITPR3; the interaction with ITPR1 is increased in the presence of AHCLY1. Interacts with AHCYL1. Interacts with HIP1R (via ENTH and I/LWEQ domains). Interacts with CASP9. Interacts with BCL2L11/BIM. Interacts with BIK. Interacts with UBQLN4. Interacts with NME2/NM23-H2. Interacts with and PMAIP1/NOXA. Interacts with TPX2. Interacts with UBQLN1; in the cytoplasm. Interacts (via BH1 domain) with BECN1. Ca(2+) is required as a cofactor. Monoubiquitinated by UBQLN1; results in stabilization of BCL2L10 protein abundance and in relocalization from mitochondria to cytoplasm. As to expression, expressed in oligodendroglial lineage cells.

The protein resides in the mitochondrion. Its subcellular location is the nucleus membrane. The protein localises to the endoplasmic reticulum. It localises to the cytoplasm. It is found in the cytoskeleton. The protein resides in the spindle. In terms of biological role, promotes cell survival by suppressing apoptosis induced by BAX but not BAK. Increases binding of AHCYL1/IRBIT to ITPR1. Reduces ITPR1-mediated calcium release from the endoplasmic reticulum cooperatively with AHCYL1/IRBIT under normal cellular conditions. Under apoptotic stress conditions, dissociates from ITPR1 and is displaced from mitochondria-associated endoplasmic reticulum membranes, leading to increased Ca(2+) transfer to mitochondria which promotes apoptosis. Required for the correct formation of the microtubule organizing center during oocyte cell division, potentially via regulation of protein abundance and localization of other microtubule organizing center components such as AURKA and TPX2. This Rattus norvegicus (Rat) protein is Bcl-2-like protein 10.